A 485-amino-acid polypeptide reads, in one-letter code: Expansin-like protein 8 (485 aa).

Positions 1–21 (MRISIILLSLLFLSLHSLIKA) are cleaved as a signal peptide. Residues 22 to 464 (DITKLSVCGS…QSGHHASSNT (443 aa)) are Extracellular-facing. Residues 26 to 139 (LSVCGSARAV…QIVSCGYSGN (114 aa)) enclose the Expansin-like EG45 domain. 2 cysteine pairs are disulfide-bonded: Cys29–Cys70 and Cys73–Cys134. Asn117 and Asn365 each carry an N-linked (GlcNAc...) asparagine glycan. A disordered region spans residues 408 to 436 (EVNNKPSTTSGTGTTSSKPSSSSGGVSGG). Residues 414 to 431 (STTSGTGTTSSKPSSSSG) show a composition bias toward low complexity. Asn454 is a glycosylation site (N-linked (GlcNAc...) asparagine). Residues 465 to 485 (NILLPTTFVFFISITILSLLF) form a helical membrane-spanning segment.

Belongs to the expansin family. Expansin A subfamily.

The protein resides in the membrane. Its function is as follows. May serve to lubricate the movement of the cellulose microfibrils during cell growth and wall extension and/or may serve to maintain the fluid state of the slug cell wall. In Dictyostelium discoideum (Social amoeba), this protein is Expansin-like protein 8 (expl8).